Reading from the N-terminus, the 54-residue chain is UPF0434 protein BCI_0256 (54 aa).

The protein belongs to the UPF0434 family.

This Baumannia cicadellinicola subsp. Homalodisca coagulata protein is UPF0434 protein BCI_0256.